The primary structure comprises 330 residues: Ketol-acid reductoisomerase (NADP(+)) (330 aa).

The KARI N-terminal Rossmann domain maps to 2-182; sequence VEIYYDDDAS…GGTRAGALRT (181 aa). NADP(+) contacts are provided by residues 25-28, Ser51, and Ser53; that span reads YGSQ. His108 is a catalytic residue. Residue Gly134 participates in NADP(+) binding. The KARI C-terminal knotted domain maps to 183–328; it reads TFTEETETDL…AKLRPLMSWI (146 aa). Residues Asp191, Glu195, Glu227, and Glu231 each coordinate Mg(2+). Residue Ser252 participates in substrate binding.

It belongs to the ketol-acid reductoisomerase family. Requires Mg(2+) as cofactor.

It carries out the reaction (2R)-2,3-dihydroxy-3-methylbutanoate + NADP(+) = (2S)-2-acetolactate + NADPH + H(+). The enzyme catalyses (2R,3R)-2,3-dihydroxy-3-methylpentanoate + NADP(+) = (S)-2-ethyl-2-hydroxy-3-oxobutanoate + NADPH + H(+). It participates in amino-acid biosynthesis; L-isoleucine biosynthesis; L-isoleucine from 2-oxobutanoate: step 2/4. Its pathway is amino-acid biosynthesis; L-valine biosynthesis; L-valine from pyruvate: step 2/4. Involved in the biosynthesis of branched-chain amino acids (BCAA). Catalyzes an alkyl-migration followed by a ketol-acid reduction of (S)-2-acetolactate (S2AL) to yield (R)-2,3-dihydroxy-isovalerate. In the isomerase reaction, S2AL is rearranged via a Mg-dependent methyl migration to produce 3-hydroxy-3-methyl-2-ketobutyrate (HMKB). In the reductase reaction, this 2-ketoacid undergoes a metal-dependent reduction by NADPH to yield (R)-2,3-dihydroxy-isovalerate. The polypeptide is Ketol-acid reductoisomerase (NADP(+)) (Frankia alni (strain DSM 45986 / CECT 9034 / ACN14a)).